The primary structure comprises 244 residues: MNFSVIIPARYASSRLPAKLLRDVHGKPLIQLTYENAVNSGANRVIIATDDKRIEVVANDFGAITCMTDGHFTSGTLRIAQVLEKLDINDDEIIVNVQGDEPMLDPSVIDQVVNNLATNPMQIATLCKQITDKAQYFDPNCVKVVFNKIGKALYFSRATIPFFREARDFDLKLCYKHIGVYAYRAGVIKQYLTMNSSSYEKVEKLEQLTALNEGFDIHVAPACASVGHGVDIQRDLDEVRKELG.

The protein belongs to the KdsB family.

It localises to the cytoplasm. It carries out the reaction 3-deoxy-alpha-D-manno-oct-2-ulosonate + CTP = CMP-3-deoxy-beta-D-manno-octulosonate + diphosphate. Its pathway is nucleotide-sugar biosynthesis; CMP-3-deoxy-D-manno-octulosonate biosynthesis; CMP-3-deoxy-D-manno-octulosonate from 3-deoxy-D-manno-octulosonate and CTP: step 1/1. The protein operates within bacterial outer membrane biogenesis; lipopolysaccharide biosynthesis. Activates KDO (a required 8-carbon sugar) for incorporation into bacterial lipopolysaccharide in Gram-negative bacteria. The protein is 3-deoxy-manno-octulosonate cytidylyltransferase of Vesicomyosocius okutanii subsp. Calyptogena okutanii (strain HA).